We begin with the raw amino-acid sequence, 431 residues long: MASSMLTKQFLGAPFSSFGSGQQPSKLCSSNLRFPTHRSQPKRLEIQAAGNTFGNYFRVTTFGESHGGGVGCIIDGCPPRLPLSESDMQVELDRRRPGQSRITTPRKETDTCKISSGTADGLTTGSPIKVEVPNTDQRGNDYSEMSLAYRPSHADATYDFKYGVRSVQGGGRSSARETIGRVAAGAVAKKILKLYSGTEILAYVSQVHNVVLPEDLVDNQIVTLEQIESNIVRCPNPEYAEKMIGAIDYVRVRGDSVGGVVTCIVRNVPRGLGTPVFDKLEAELAKACMSLPATKGFEFGSGFAGTFMTGSEHNDEFFMDEHDQIRTKTNRSGGIQGGISNGEIINMRVAFKPTSTIARKQHTVSRDKHETELIARGRHDPCVVPRAVPMVEAMVALVLVDQLMTQYAQCMLFPVNLTLQEPLQPSTTKSA.

The N-terminal 48 residues, 1 to 48 (MASSMLTKQFLGAPFSSFGSGQQPSKLCSSNLRFPTHRSQPKRLEIQA), are a transit peptide targeting the chloroplast. The tract at residues 93–141 (DRRRPGQSRITTPRKETDTCKISSGTADGLTTGSPIKVEVPNTDQRGND) is disordered. Positions 112-126 (CKISSGTADGLTTGS) are enriched in polar residues.

It belongs to the chorismate synthase family. In terms of assembly, homotetramer. The cofactor is FMNH2. In terms of tissue distribution, predominantly expressed in flowers and roots and, to a lesser extent, in stems, leaves, and cotyledons.

It is found in the plastid. The protein localises to the chloroplast. The enzyme catalyses 5-O-(1-carboxyvinyl)-3-phosphoshikimate = chorismate + phosphate. Its pathway is metabolic intermediate biosynthesis; chorismate biosynthesis; chorismate from D-erythrose 4-phosphate and phosphoenolpyruvate: step 7/7. Catalyzes the last common step of the biosynthesis of aromatic amino acids, produced via the shikimic acid pathway. The polypeptide is Chorismate synthase 2, chloroplastic (CS2) (Solanum lycopersicum (Tomato)).